Reading from the N-terminus, the 266-residue chain is Putative carbamate hydrolase RutD (266 aa).

In terms of domain architecture, AB hydrolase-1 spans 15–239; the sequence is PVVVLSAGLG…RVEMPWGGHA (225 aa).

It belongs to the AB hydrolase superfamily. Hydrolase RutD family.

The catalysed reaction is carbamate + 2 H(+) = NH4(+) + CO2. In terms of biological role, involved in pyrimidine catabolism. May facilitate the hydrolysis of carbamate, a reaction that can also occur spontaneously. This chain is Putative carbamate hydrolase RutD, found in Klebsiella variicola (strain At-22).